Here is a 115-residue protein sequence, read N- to C-terminus: UPF0212 protein MJ0068 (115 aa).

Belongs to the UPF0212 family.

The chain is UPF0212 protein MJ0068 from Methanocaldococcus jannaschii (strain ATCC 43067 / DSM 2661 / JAL-1 / JCM 10045 / NBRC 100440) (Methanococcus jannaschii).